The sequence spans 326 residues: Protein FAM50 homolog (326 aa).

Residues 77–111 form a disordered region; the sequence is ISNRDLQVARGDQSSSTQSKDSQEAREKEEHVAKH. Positions 97 to 109 are enriched in basic and acidic residues; that stretch reads DSQEAREKEEHVA.

It belongs to the FAM50 family.

In Caenorhabditis elegans, this protein is Protein FAM50 homolog.